Reading from the N-terminus, the 632-residue chain is Probable potassium transport system protein Kup (632 aa).

The next 12 helical transmembrane spans lie at 19-39 (LVVG…LYSL), 59-79 (IISM…VMFV), 110-130 (LIMM…VITP), 146-166 (PGLS…LFFI), 178-198 (FGPI…IHLV), 221-241 (LQAF…EALY), 256-276 (WFVL…AMLL), 298-318 (MVLL…SGAF), 346-366 (IYMP…VLAF), 375-395 (AYGI…ALVM), 403-423 (PALV…FFAA), and 428-448 (IAEG…LLMT).

The protein belongs to the HAK/KUP transporter (TC 2.A.72) family.

It localises to the cell inner membrane. It carries out the reaction K(+)(in) + H(+)(in) = K(+)(out) + H(+)(out). In terms of biological role, transport of potassium into the cell. Likely operates as a K(+):H(+) symporter. The chain is Probable potassium transport system protein Kup from Cupriavidus metallidurans (strain ATCC 43123 / DSM 2839 / NBRC 102507 / CH34) (Ralstonia metallidurans).